We begin with the raw amino-acid sequence, 287 residues long: ATP synthase gamma chain (287 aa).

It belongs to the ATPase gamma chain family. As to quaternary structure, F-type ATPases have 2 components, CF(1) - the catalytic core - and CF(0) - the membrane proton channel. CF(1) has five subunits: alpha(3), beta(3), gamma(1), delta(1), epsilon(1). CF(0) has three main subunits: a, b and c.

Its subcellular location is the cell inner membrane. Functionally, produces ATP from ADP in the presence of a proton gradient across the membrane. The gamma chain is believed to be important in regulating ATPase activity and the flow of protons through the CF(0) complex. This chain is ATP synthase gamma chain, found in Geobacter sp. (strain M21).